The sequence spans 255 residues: Acetyl-coenzyme A carboxylase carboxyl transferase subunit alpha (255 aa).

The CoA carboxyltransferase C-terminal domain maps to 1–235; sequence MNIAKIVREA…KKELQTELAR (235 aa).

The protein belongs to the AccA family. In terms of assembly, acetyl-CoA carboxylase is a heterohexamer composed of biotin carboxyl carrier protein (AccB), biotin carboxylase (AccC) and two subunits each of ACCase subunit alpha (AccA) and ACCase subunit beta (AccD).

Its subcellular location is the cytoplasm. The catalysed reaction is N(6)-carboxybiotinyl-L-lysyl-[protein] + acetyl-CoA = N(6)-biotinyl-L-lysyl-[protein] + malonyl-CoA. The protein operates within lipid metabolism; malonyl-CoA biosynthesis; malonyl-CoA from acetyl-CoA: step 1/1. Component of the acetyl coenzyme A carboxylase (ACC) complex. First, biotin carboxylase catalyzes the carboxylation of biotin on its carrier protein (BCCP) and then the CO(2) group is transferred by the carboxyltransferase to acetyl-CoA to form malonyl-CoA. In Streptococcus pneumoniae serotype 2 (strain D39 / NCTC 7466), this protein is Acetyl-coenzyme A carboxylase carboxyl transferase subunit alpha.